A 461-amino-acid chain; its full sequence is NADH-ubiquinone oxidoreductase chain 4 (461 aa).

13 helical membrane-spanning segments follow: residues proline 20 to leucine 42, proline 61 to serine 81, glutamine 93 to alanine 113, threonine 114 to isoleucine 134, glycine 147 to methionine 167, tryptophan 197 to leucine 217, proline 225 to methionine 245, leucine 258 to leucine 278, serine 285 to threonine 304, glycine 309 to alanine 331, valine 351 to proline 371, threonine 393 to leucine 413, and leucine 436 to tryptophan 456.

Belongs to the complex I subunit 4 family.

It localises to the mitochondrion membrane. The catalysed reaction is a ubiquinone + NADH + 5 H(+)(in) = a ubiquinol + NAD(+) + 4 H(+)(out). Functionally, core subunit of the mitochondrial membrane respiratory chain NADH dehydrogenase (Complex I) that is believed to belong to the minimal assembly required for catalysis. Complex I functions in the transfer of electrons from NADH to the respiratory chain. The immediate electron acceptor for the enzyme is believed to be ubiquinone. This is NADH-ubiquinone oxidoreductase chain 4 (MT-ND4) from Latimeria chalumnae (Coelacanth).